A 157-amino-acid polypeptide reads, in one-letter code: Protein FAM162B (157 aa).

A helical transmembrane segment spans residues 104–123 (ACYIMIGLTIVACFAVIVSA).

The protein belongs to the UPF0389 family.

The protein localises to the membrane. In Mus musculus (Mouse), this protein is Protein FAM162B (Fam162b).